Here is a 306-residue protein sequence, read N- to C-terminus: Ribosomal RNA small subunit methyltransferase H (306 aa).

S-adenosyl-L-methionine is bound by residues 36-38, aspartate 56, phenylalanine 80, aspartate 97, and glutamine 104; that span reads GGH. Residues 280 to 306 are disordered; sequence ASEEEVAGNPRSRSAVMRVAERTGEAA.

The protein belongs to the methyltransferase superfamily. RsmH family.

It localises to the cytoplasm. The enzyme catalyses cytidine(1402) in 16S rRNA + S-adenosyl-L-methionine = N(4)-methylcytidine(1402) in 16S rRNA + S-adenosyl-L-homocysteine + H(+). In terms of biological role, specifically methylates the N4 position of cytidine in position 1402 (C1402) of 16S rRNA. The protein is Ribosomal RNA small subunit methyltransferase H of Polaromonas naphthalenivorans (strain CJ2).